We begin with the raw amino-acid sequence, 313 residues long: Biotin synthase (313 aa).

One can recognise a Radical SAM core domain in the interval 28-258; the sequence is NFGNDIELCS…LFPQARLRLS (231 aa). [4Fe-4S] cluster is bound by residues cysteine 46, cysteine 50, and cysteine 53. [2Fe-2S] cluster contacts are provided by cysteine 90, cysteine 121, cysteine 181, and arginine 256.

This sequence belongs to the radical SAM superfamily. Biotin synthase family. In terms of assembly, homodimer. It depends on [4Fe-4S] cluster as a cofactor. [2Fe-2S] cluster serves as cofactor.

The catalysed reaction is (4R,5S)-dethiobiotin + (sulfur carrier)-SH + 2 reduced [2Fe-2S]-[ferredoxin] + 2 S-adenosyl-L-methionine = (sulfur carrier)-H + biotin + 2 5'-deoxyadenosine + 2 L-methionine + 2 oxidized [2Fe-2S]-[ferredoxin]. The protein operates within cofactor biosynthesis; biotin biosynthesis; biotin from 7,8-diaminononanoate: step 2/2. Its function is as follows. Catalyzes the conversion of dethiobiotin (DTB) to biotin by the insertion of a sulfur atom into dethiobiotin via a radical-based mechanism. The protein is Biotin synthase of Francisella tularensis subsp. mediasiatica (strain FSC147).